The primary structure comprises 98 residues: Small ribosomal subunit protein bS18 (98 aa).

This sequence belongs to the bacterial ribosomal protein bS18 family. Part of the 30S ribosomal subunit. Forms a tight heterodimer with protein bS6.

Its function is as follows. Binds as a heterodimer with protein bS6 to the central domain of the 16S rRNA, where it helps stabilize the platform of the 30S subunit. This chain is Small ribosomal subunit protein bS18, found in Flavobacterium psychrophilum (strain ATCC 49511 / DSM 21280 / CIP 103535 / JIP02/86).